The following is a 181-amino-acid chain: Isopentenyl-diphosphate Delta-isomerase (181 aa).

Residues His24 and His30 each coordinate Mn(2+). Residues 28 to 168 (LLHLAFSVLL…PDTFSVWFPT (141 aa)) form the Nudix hydrolase domain. Cys68 is an active-site residue. Cys68 provides a ligand contact to Mg(2+). Residue His70 participates in Mn(2+) binding. Residue Glu88 coordinates Mg(2+). Glu117 and Glu119 together coordinate Mn(2+). Residue Glu119 is part of the active site.

This sequence belongs to the IPP isomerase type 1 family. Requires Mg(2+) as cofactor. Mn(2+) is required as a cofactor.

It localises to the cytoplasm. It carries out the reaction isopentenyl diphosphate = dimethylallyl diphosphate. It functions in the pathway isoprenoid biosynthesis; dimethylallyl diphosphate biosynthesis; dimethylallyl diphosphate from isopentenyl diphosphate: step 1/1. Catalyzes the 1,3-allylic rearrangement of the homoallylic substrate isopentenyl (IPP) to its highly electrophilic allylic isomer, dimethylallyl diphosphate (DMAPP). The sequence is that of Isopentenyl-diphosphate Delta-isomerase from Aliivibrio fischeri (strain ATCC 700601 / ES114) (Vibrio fischeri).